The following is a 506-amino-acid chain: Maturase K (506 aa).

It belongs to the intron maturase 2 family. MatK subfamily.

It is found in the plastid. The protein localises to the chloroplast. In terms of biological role, usually encoded in the trnK tRNA gene intron. Probably assists in splicing its own and other chloroplast group II introns. The protein is Maturase K of Arctostaphylos uva-ursi (Bearberry).